A 491-amino-acid chain; its full sequence is Acetyl-coenzyme A carboxylase carboxyl transferase subunit beta (491 aa).

A CoA carboxyltransferase N-terminal domain is found at 132–491 (LWNQCENCFI…ISELLNLHAL (360 aa)). Zn(2+) is bound by residues Cys136, Cys139, Cys155, and Cys158. Residues 136–158 (CENCFIPNYKKVLKSNMQICEEC) form a C4-type zinc finger. The span at 252–262 (EKVEEWTKPDL) shows a compositional bias: basic and acidic residues. Disordered stretches follow at residues 252-273 (EKVE…DEER) and 279-298 (DKGE…EDDD). Acidic residues predominate over residues 284–298 (SQEIEDSEANDEDDD).

Belongs to the AccD/PCCB family. Acetyl-CoA carboxylase is a heterohexamer composed of biotin carboxyl carrier protein, biotin carboxylase and 2 subunits each of ACCase subunit alpha and ACCase plastid-coded subunit beta (accD). It depends on Zn(2+) as a cofactor.

The protein localises to the plastid. The enzyme catalyses N(6)-carboxybiotinyl-L-lysyl-[protein] + acetyl-CoA = N(6)-biotinyl-L-lysyl-[protein] + malonyl-CoA. The protein operates within lipid metabolism; malonyl-CoA biosynthesis; malonyl-CoA from acetyl-CoA: step 1/1. In terms of biological role, component of the acetyl coenzyme A carboxylase (ACC) complex. Biotin carboxylase (BC) catalyzes the carboxylation of biotin on its carrier protein (BCCP) and then the CO(2) group is transferred by the transcarboxylase to acetyl-CoA to form malonyl-CoA. The protein is Acetyl-coenzyme A carboxylase carboxyl transferase subunit beta of Cuscuta gronovii (Common dodder).